The sequence spans 341 residues: Cytochrome c biogenesis protein CcsA (341 aa).

A run of 8 helical transmembrane segments spans residues 16–36 (LILLLTMLIYWAGAAFPGMSI), 37–57 (LPTLGTAGVAIANLSIATLLG), 68–88 (LSNLYESLFFLAWGVTAVHLI), 97–117 (LVGVVTTPVAMGITAFAALSL), 142–162 (VMMLSYATLMVGAVLAIAFLI), 249–269 (IIGLGFPLLTIGIIAGAVWAN), 276–296 (WSWDPKETWALITWLVFAAYL), and 310–330 (AILAASGFIVVWVCYLGVNLL).

It belongs to the CcmF/CycK/Ccl1/NrfE/CcsA family. In terms of assembly, may interact with ccs1.

It is found in the cellular thylakoid membrane. Functionally, required during biogenesis of c-type cytochromes (cytochrome c6 and cytochrome f) at the step of heme attachment. The chain is Cytochrome c biogenesis protein CcsA from Rippkaea orientalis (strain PCC 8801 / RF-1) (Cyanothece sp. (strain PCC 8801)).